Consider the following 127-residue polypeptide: Longitudinals lacking protein-like (127 aa).

Residues 33–98 enclose the BTB domain; sequence TDVTLACEGQ…MYAGEVNVSQ (66 aa).

In terms of assembly, the BTB domain interacts with the BTB domain of Trl in vitro. Found in a Pc-containing complex.

The protein resides in the nucleus. Its function is as follows. Required, together with Trl, for maintaining the repressed state of target genes including homeotic genes Scr and Ubx. May also be involved in the activation of homeotic genes. Binds to a DNA Polycomb response element (PRE) at the bithorax complex. Also binds to polytene chromosomes at several hundred sites, many of which are shared with Trl and ph-p. Required during embryonic development. The polypeptide is Longitudinals lacking protein-like (Drosophila melanogaster (Fruit fly)).